We begin with the raw amino-acid sequence, 152 residues long: Ninjurin-1 (152 aa).

Position 1 is an N-acetylmethionine (Met1). A compositionally biased stretch (acidic residues) spans 1 to 10 (MESGTEEYEL). Residues 1–29 (MESGTEEYELNGDLRPGSPGSPDALPPRW) are disordered. Residues 1-78 (MESGTEEYEL…EQGNDFAFFV (78 aa)) lie on the Extracellular side of the membrane. A phosphoserine mark is found at Ser18 and Ser21. Residues 26-37 (PPRWGLRNRPIN) form an N-terminal adhesion motif region. Positions 40 to 69 (HYANKKSAAESMLDIALLMANASQLKAVVE) are required to induce plasma membrane rupture. The segment at 44-55 (KKSAAESMLDIA) is helix alpha1. Residues 58-74 (MANASQLKAVVEQGNDF) are helix alpha2. N-linked (GlcNAc...) asparagine glycosylation occurs at Asn60. A helical membrane pass occupies residues 79-103 (PLVVLISISLVLQIGVGVLLIFLVK). Residues 104 to 113 (YDLNNPAKHA) lie on the Cytoplasmic side of the membrane. Residues 114–138 (KLDFLNNLATGLVFIIVVVNIFITA) traverse the membrane as a helical segment. The Extracellular segment spans residues 139–152 (FGVQKPVMDVAPRQ).

It belongs to the ninjurin family. In terms of assembly, homodimer; in absence of death stimuli, forms an inactive homodimer. Homooligomer; in response to death stimuli, homooligomerizes into long, highly branched filaments and large, ring-shaped structures in the membrane. Cleaved by MMP9 protease to generate the Secreted ninjurin-1 form. Post-translationally, N-linked glycosylation is required for homooligomerization.

The protein resides in the cell membrane. It localises to the synaptic cell membrane. It is found in the secreted. Its activity is regulated as follows. In response to death stimuli, homooligomerizes and disrupts membrane integrity by introducing the hydrophilic faces of alpha1 and alpha2 helices into the hydrophobic membrane. Homooligomerization and ability to mediate plasma membrane rupture is inhibited by glycine; it is unclear whether glycine directly or indirectly inhibits homooligomerization. In normal conditions, NINJ1 is autoinhibited via formation of a homodimer: in the inactive homodimer, the alpha1 and alpha2 helices (residues 44-74) form a single transmembrane region without a kink, in which hydrophilic faces of alpha1 and alpha2 helices are sequestered. Its function is as follows. Effector of various programmed cell death, such as pyroptosis and necroptosis, which mediates plasma membrane rupture (cytolysis). Oligomerizes in response to death stimuli and forms ring-like structures on the plasma membrane: acts by cutting and shedding membrane disks, like a cookie cutter, leading to membrane damage and loss that cannot be repaired by the cell. Plasma membrane rupture leads to release intracellular molecules named damage-associated molecular patterns (DAMPs) that propagate the inflammatory response. Mechanistically, mediates plasma membrane rupture by introducing hydrophilic faces of 2 alpha helices into the hydrophobic membrane. Induces plasma membrane rupture downstream of Gasdermin (GSDMA, GSDMB, GSDMC, GSDMD, or GSDME) or MLKL during pyroptosis or necroptosis, respectively. Acts as an effector of PANoptosis downstream of CASP1, CASP4, CASP8 and RIPK3. Also induces plasma membrane rupture in response to cell swelling caused by osmotic stress and ferroptosis downstream of lipid peroxidation. Acts as a regulator of Toll-like receptor 4 (TLR4) signaling triggered by lipopolysaccharide (LPS) during systemic inflammation; directly binds LPS. Involved in leukocyte migration during inflammation by promoting transendothelial migration of macrophages via homotypic binding. Promotes the migration of monocytes across the brain endothelium to central nervous system inflammatory lesions. Also acts as a homophilic transmembrane adhesion molecule involved in various processes such as axonal growth, cell chemotaxis and angiogenesis. Promotes cell adhesion by mediating homophilic interactions via its extracellular N-terminal adhesion motif (N-NAM). Involved in the progression of the inflammatory stress by promoting cell-to-cell interactions between immune cells and endothelial cells. Plays a role in nerve regeneration by promoting maturation of Schwann cells. Acts as a regulator of angiogenesis. Promotes the formation of new vessels by mediating the interaction between capillary pericyte cells and endothelial cells. Also mediates vascular functions in penile tissue as well as vascular formation. Promotes osteoclasts development by enhancing the survival of prefusion osteoclasts. Also involved in striated muscle growth and differentiation. Also involved in cell senescence in a p53/TP53 manner, possibly by acting as an indirect regulator of p53/TP53 mRNA translation. Functionally, secreted form generated by cleavage, which has chemotactic activity. Acts as an anti-inflammatory mediator by promoting monocyte recruitment, thereby ameliorating atherosclerosis. The sequence is that of Ninjurin-1 from Mus musculus (Mouse).